The following is a 244-amino-acid chain: Proteasome assembly chaperone 2 (244 aa).

Belongs to the PSMG2 family. Forms a heterodimer with psmg1.

The protein resides in the nucleus. In terms of biological role, chaperone protein which promotes assembly of the 20S proteasome as part of a heterodimer with psmg1. The chain is Proteasome assembly chaperone 2 (psmg2) from Nematostella vectensis (Starlet sea anemone).